The sequence spans 296 residues: MNLQTMIRTLQDYWSEQGCIMLQSYDVEKGAGTMSPYTFLKAIGPEPWKAGYVEPSRRPADGRYGENPNRLFQHHQFQVVMKPSPDNIQELYLGSLEKLGINPLEHDIRFVEDNWENPSLGCAGLGWEVWLDGMEITQFTYFQQVGGLECFPVTSEITYGVERLASYIQDKENVFDLEWTEGISYRDIFFQAEFENSTYAFETSNTDMLLTLFDTYEREATRQMQDGLVFPAYDYVLKCSHTFNLLDARGVVSVTERAQYIGRIRNLARRIAKTFYESREKLGFPLVKEEGGKRHE.

The protein belongs to the class-II aminoacyl-tRNA synthetase family. Tetramer of two alpha and two beta subunits.

The protein localises to the cytoplasm. It carries out the reaction tRNA(Gly) + glycine + ATP = glycyl-tRNA(Gly) + AMP + diphosphate. This is Glycine--tRNA ligase alpha subunit from Listeria monocytogenes serotype 4b (strain CLIP80459).